A 1049-amino-acid chain; its full sequence is Cilia- and flagella-associated protein 337 (1049 aa).

Residues 81 to 116 form the EF-hand domain; the sequence is GTKEEYGELFDKVDVAQDGFINWDKLTSFILLELYE. 6 WD repeats span residues 138–177, 358–397, 401–440, 487–528, 531–570, and 633–671; these read KHKD…QETF, NIAQ…KPVG, GHSA…SIQR, SHEK…KQFT, HGNA…HHTL, and QHHD…AHHV. The interval 691–712 is disordered; sequence LLSAGRSQPSHPMADHSTTGVR. The segment covering 695–711 has biased composition (polar residues); sequence GRSQPSHPMADHSTTGV. WD repeat units lie at residues 719–766, 769–809, and 825–866; these read EGKN…LLAE, AHSG…LNSS, and PHED…VWIF.

It belongs to the CFAP337 family. In terms of assembly, associates with components of the nexin-dynein regulatory complex (N-DRC) and the CFAP184:CFAP263 complex.

The protein localises to the cell projection. The protein resides in the cilium. Its function is as follows. Associates with components of the nexin-dynein regulatory complex (N-DRC), a key regulator of ciliary/flagellar motility, and might act as an inner dynein arm (IDA) hub or linkage. The chain is Cilia- and flagella-associated protein 337 from Homo sapiens (Human).